The chain runs to 469 residues: UDP-N-acetylmuramate--L-alanine ligase (469 aa).

114–120 (GTHGKTT) contributes to the ATP binding site.

Belongs to the MurCDEF family.

It is found in the cytoplasm. It carries out the reaction UDP-N-acetyl-alpha-D-muramate + L-alanine + ATP = UDP-N-acetyl-alpha-D-muramoyl-L-alanine + ADP + phosphate + H(+). It functions in the pathway cell wall biogenesis; peptidoglycan biosynthesis. In terms of biological role, cell wall formation. This Chlorobium phaeovibrioides (strain DSM 265 / 1930) (Prosthecochloris vibrioformis (strain DSM 265)) protein is UDP-N-acetylmuramate--L-alanine ligase.